A 204-amino-acid chain; its full sequence is LexA repressor (204 aa).

The H-T-H motif DNA-binding region spans 28-48 (RAEIANRLGFKSANAAEEHLK). Catalysis depends on for autocatalytic cleavage activity residues serine 121 and lysine 158.

It belongs to the peptidase S24 family. As to quaternary structure, homodimer.

The enzyme catalyses Hydrolysis of Ala-|-Gly bond in repressor LexA.. Its function is as follows. Represses a number of genes involved in the response to DNA damage (SOS response), including recA and lexA. In the presence of single-stranded DNA, RecA interacts with LexA causing an autocatalytic cleavage which disrupts the DNA-binding part of LexA, leading to derepression of the SOS regulon and eventually DNA repair. This chain is LexA repressor, found in Shewanella frigidimarina (strain NCIMB 400).